A 702-amino-acid polypeptide reads, in one-letter code: Elongation factor G (702 aa).

The tr-type G domain occupies 8-290 (HRVRNIGIAA…AVAMYLPAPT (283 aa)). Residues 17 to 24 (AHIDAGKT), 87 to 91 (DTPGH), and 141 to 144 (NKMD) contribute to the GTP site.

Belongs to the TRAFAC class translation factor GTPase superfamily. Classic translation factor GTPase family. EF-G/EF-2 subfamily.

Its subcellular location is the cytoplasm. Its function is as follows. Catalyzes the GTP-dependent ribosomal translocation step during translation elongation. During this step, the ribosome changes from the pre-translocational (PRE) to the post-translocational (POST) state as the newly formed A-site-bound peptidyl-tRNA and P-site-bound deacylated tRNA move to the P and E sites, respectively. Catalyzes the coordinated movement of the two tRNA molecules, the mRNA and conformational changes in the ribosome. This chain is Elongation factor G, found in Aliarcobacter butzleri (strain RM4018) (Arcobacter butzleri).